Consider the following 210-residue polypeptide: Proteasome subunit beta (210 aa).

Positions M1 to G7 are cleaved as a propeptide — removed in mature form; by autocatalysis. The Nucleophile role is filled by T8.

This sequence belongs to the peptidase T1B family. As to quaternary structure, the 20S proteasome core is composed of 14 alpha and 14 beta subunits that assemble into four stacked heptameric rings, resulting in a barrel-shaped structure. The two inner rings, each composed of seven catalytic beta subunits, are sandwiched by two outer rings, each composed of seven alpha subunits. The catalytic chamber with the active sites is on the inside of the barrel. Has a gated structure, the ends of the cylinder being occluded by the N-termini of the alpha-subunits. Is capped at one or both ends by the proteasome regulatory ATPase, PAN.

The protein resides in the cytoplasm. It carries out the reaction Cleavage of peptide bonds with very broad specificity.. The formation of the proteasomal ATPase PAN-20S proteasome complex, via the docking of the C-termini of PAN into the intersubunit pockets in the alpha-rings, triggers opening of the gate for substrate entry. Interconversion between the open-gate and close-gate conformations leads to a dynamic regulation of the 20S proteasome proteolysis activity. Functionally, component of the proteasome core, a large protease complex with broad specificity involved in protein degradation. The protein is Proteasome subunit beta of Picrophilus torridus (strain ATCC 700027 / DSM 9790 / JCM 10055 / NBRC 100828 / KAW 2/3).